Here is a 368-residue protein sequence, read N- to C-terminus: UDP-N-acetylglucosamine--N-acetylmuramyl-(pentapeptide) pyrophosphoryl-undecaprenol N-acetylglucosamine transferase (368 aa).

Residues Thr13–Gly15, Asn124, Arg167, Ser195, and Gln296 each bind UDP-N-acetyl-alpha-D-glucosamine.

Belongs to the glycosyltransferase 28 family. MurG subfamily.

It localises to the cell inner membrane. The catalysed reaction is di-trans,octa-cis-undecaprenyl diphospho-N-acetyl-alpha-D-muramoyl-L-alanyl-D-glutamyl-meso-2,6-diaminopimeloyl-D-alanyl-D-alanine + UDP-N-acetyl-alpha-D-glucosamine = di-trans,octa-cis-undecaprenyl diphospho-[N-acetyl-alpha-D-glucosaminyl-(1-&gt;4)]-N-acetyl-alpha-D-muramoyl-L-alanyl-D-glutamyl-meso-2,6-diaminopimeloyl-D-alanyl-D-alanine + UDP + H(+). The protein operates within cell wall biogenesis; peptidoglycan biosynthesis. Functionally, cell wall formation. Catalyzes the transfer of a GlcNAc subunit on undecaprenyl-pyrophosphoryl-MurNAc-pentapeptide (lipid intermediate I) to form undecaprenyl-pyrophosphoryl-MurNAc-(pentapeptide)GlcNAc (lipid intermediate II). The protein is UDP-N-acetylglucosamine--N-acetylmuramyl-(pentapeptide) pyrophosphoryl-undecaprenol N-acetylglucosamine transferase of Maricaulis maris (strain MCS10) (Caulobacter maris).